Here is a 284-residue protein sequence, read N- to C-terminus: Tropomyosin beta chain (284 aa).

Methionine 1 bears the N-acetylmethionine mark. The tract at residues 1–65 (MDAIKKKMQM…EVEKYSESVK (65 aa)) is disordered. Positions 1 to 284 (MDAIKKKMQM…DNALNDITSL (284 aa)) form a coiled coil. Composition is skewed to basic and acidic residues over residues 12-40 (KLDK…KQLE) and 51-65 (KGTE…ESVK). A Phosphothreonine modification is found at threonine 53. At serine 61 the chain carries Phosphoserine; by PIK3CG. At threonine 79 the chain carries Phosphothreonine. Phosphoserine is present on serine 87. Phosphothreonine is present on threonine 108. Positions 117-136 (EKAADESERGMKVIENRAMK) are disordered. Residues serine 158, serine 206, and serine 215 each carry the phosphoserine modification. Threonine 252 bears the Phosphothreonine mark. A Phosphotyrosine modification is found at tyrosine 261. Position 271 is a phosphoserine (serine 271). The residue at position 282 (threonine 282) is a Phosphothreonine. Residue serine 283 is modified to Phosphoserine.

The protein belongs to the tropomyosin family. In terms of assembly, homodimer. Heterodimer of an alpha (TPM1, TPM3 or TPM4) and a beta (TPM2) chain. In terms of processing, phosphorylated on Ser-61 by PIK3CG. Phosphorylation on Ser-61 is required for ADRB2 internalization. In terms of tissue distribution, present in primary breast cancer tissue, absent from normal breast tissue.

The protein resides in the cytoplasm. It localises to the cytoskeleton. In terms of biological role, binds to actin filaments in muscle and non-muscle cells. Plays a central role, in association with the troponin complex, in the calcium dependent regulation of vertebrate striated muscle contraction. Smooth muscle contraction is regulated by interaction with caldesmon. In non-muscle cells is implicated in stabilizing cytoskeleton actin filaments. The non-muscle isoform may have a role in agonist-mediated receptor internalization. The chain is Tropomyosin beta chain (TPM2) from Homo sapiens (Human).